The chain runs to 366 residues: Isopropyl malate dehydrogenase htyC (366 aa).

71 to 73 (VGG) is a binding site for NADP(+). Residues arginine 91 and arginine 130 each coordinate substrate. Mg(2+) contacts are provided by aspartate 221, aspartate 246, and aspartate 250. 277–282 (GCVHGI) contacts NADP(+).

Belongs to the isocitrate and isopropylmalate dehydrogenases family. Homodimer. The cofactor is Mg(2+). Mn(2+) is required as a cofactor.

The enzyme catalyses (2R,3S)-3-isopropylmalate + NAD(+) = 4-methyl-2-oxopentanoate + CO2 + NADH. It functions in the pathway antifungal biosynthesis. Functionally, isopropyl malate dehydrogenase; part of the gene cluster that mediates the de novo generation of L-homotyrosine from acetyl-CoA and 4-hydroxyphenyl-pyruvate. L-homotyrosine is a building block of echinocandin B, a fungal lipidated cyclic hexapeptide that acts as an antifungal agent. L-homotyrosine 4-hydroxyphenyl-pyruvate first undergoes an aldol-type condensation by htyA with the C-2 of acetyl-CoA followed by the release of CoA to form 2-(4-hydroxybenzyl)-malate. This is followed by isomerization of 2-(4-hydroxy-benzyl)-malate to 3-(4-hydroxybenzyl)-malate by htyD. Thereafter, 3-(4-hydroxybenzyl)-malate undergoes decarboxylation and oxidation to form 2-oxo-4-(4-hydroxybenzyl)butanoic acid, coupled to reduction of NAD(+) to NADH by htyC. The product then undergoes transamination catalyzed by htyB to form L-homotyrosine. The protein is Isopropyl malate dehydrogenase htyC of Aspergillus rugulosus (Emericella rugulosa).